Reading from the N-terminus, the 115-residue chain is NADH-ubiquinone oxidoreductase chain 3 (115 aa).

The next 3 membrane-spanning stretches (helical) occupy residues 4-24 (LMVM…AFWL), 55-75 (FFLV…LLPL), and 87-107 (MMLT…YEWM).

This sequence belongs to the complex I subunit 3 family. As to quaternary structure, core subunit of respiratory chain NADH dehydrogenase (Complex I) which is composed of 45 different subunits. Interacts with TMEM186. Interacts with TMEM242.

The protein resides in the mitochondrion inner membrane. The catalysed reaction is a ubiquinone + NADH + 5 H(+)(in) = a ubiquinol + NAD(+) + 4 H(+)(out). Core subunit of the mitochondrial membrane respiratory chain NADH dehydrogenase (Complex I) which catalyzes electron transfer from NADH through the respiratory chain, using ubiquinone as an electron acceptor. Essential for the catalytic activity of complex I. The sequence is that of NADH-ubiquinone oxidoreductase chain 3 from Peromyscus mexicanus (Mexican deer mouse).